We begin with the raw amino-acid sequence, 173 residues long: Peptidoglycan-associated lipoprotein (173 aa).

The N-terminal stretch at Met1–Ala21 is a signal peptide. Cys22 carries N-palmitoyl cysteine lipidation. Residue Cys22 is the site of S-diacylglycerol cysteine attachment. A disordered region spans residues Asn30 to Ala58. Residues Gly35–Gly50 show a composition bias toward gly residues. Positions Leu60–Tyr173 constitute an OmpA-like domain.

It belongs to the Pal lipoprotein family. In terms of assembly, the Tol-Pal system is composed of five core proteins: the inner membrane proteins TolA, TolQ and TolR, the periplasmic protein TolB and the outer membrane protein Pal. They form a network linking the inner and outer membranes and the peptidoglycan layer.

Its subcellular location is the cell outer membrane. Part of the Tol-Pal system, which plays a role in outer membrane invagination during cell division and is important for maintaining outer membrane integrity. The sequence is that of Peptidoglycan-associated lipoprotein from Escherichia coli O157:H7.